The following is a 1341-amino-acid chain: MPSLSGSDELIFFVNGKKVVVKKPDPEVTLLFYLRRELHLTGTKFACGEGGCGACTVMVSRYSASSKQIRHYPVTACLVPICSLHGAAVTTVEGVGSIRTRVHPVQERLAKCHGTQCGFCSPGMVMSIYTLLRNHPDPTPEQVTEALGGNLCRCTGYRPIVESGKTFCANPTVCQVKRPGRCCLEQEEEEAGSVHTREKMCTKLYDKDEFQPLDPSQEPIFPPELIRMAEDPNKRRLTFQGERTTWLAPATLPDLLELRAEFPQAPLIMGNTTVGPDIKFKGEFHPVFVSPLELPELCVLNSEGDGVTVGSGHSLAQLSDALQSIVSQQPSERTETCRALLNHLRTLAGVQIRSMATLGGHVATRATVSDLNPILAAGKTTIHLVSKEGERQIPLDGAFLEGSPRAGLRPGEIVLSVFIPYSSQWQFVSGLRQAQRQENAMAIVNAGMSVRLEDGSSTIRDLQVFYGGIGPTVLSASRTCGQLVGRQWDDQMLGEACRGILDELRLPPGAKGGQVEFRHTLMLSLLFKFYLRVQRALSKLDPQKFPDIPEEYTSALEEFPIGTPQGTQIFRCVDPHQPPQDPVGHPVMHQAGLKHATGEAAFVDDLPLVSQELFLAVVTSTRAHAKIISIDTGEALALPGVVAVITAEDVPGENNHQGEIFYAQREVVCVGQIVCTVAADTYAHAREAAQKVKVEYEDIEPRIITIEQALEHSSFLSPERKIEQGNVEQAFKHVDQVIEGEVHVEGQEHFYMETQTILAVPRAEDKEMVLHLGTQFPTHVQEFVATALNVPRNRIACHMRRAGGAFGGKVTKPALLGAVAAVAAKKTGRPIRFVLERGDDMLITAGRHPLLGRYKVGFMKSGLIKAVDLEFYINGGCTPDESQLVIEYVVLKSENAYYIPNFRCRGRACKTNLPSNTAFRGFGFPQATVVVEAYMTAVASHCDLLPEEVREMNMYKRPSQTAYRQRFDPEPLRRCWKDCLEHSSFHARKRAAEDFNRQSRWKKRGLAMIPMKYTIGVPVAYYHQAAALVHIYLDGSVLLTHGGCELGQGLHTKMMQVASRELGIPTSYIHLSETSTVTVPNAVFTAGSMGTDINGKAVQNACQTLMARLQPVIRRNPKGKWEEWIKKAFEESISLSATGYFRGFQTNMDWDKERGDAFPYYVYGAACAEVDVDCLSGAHKLLRADIFMDAAFSINPAVDIGQIEGAFVQGMGLYTTEELKYSPKGKLRSQGTNDYKIPTVTEIPEEFHVTLVHSRNPVAIYSSKGLGEAGMFLGSSVISAIWDAVAAARKERKGAESVPETLAVRSPATPEWIRMACVDQFTDMIPRDDPSTFTPWSICVS.

The 2Fe-2S ferredoxin-type domain occupies 8–95; the sequence is DELIFFVNGK…GAAVTTVEGV (88 aa). [2Fe-2S] cluster-binding residues include C47, C52, C55, and C77. Q116 lines the Mo-molybdopterin pocket. C117, C120, C152, and C154 together coordinate [2Fe-2S] cluster. Residue C154 coordinates Mo-molybdopterin. One can recognise an FAD-binding PCMH-type domain in the interval 239–424; that stretch reads FQGERTTWLA…LSVFIPYSSQ (186 aa). Residues 267–274, A348, T357, H361, D370, and V414 each bind FAD; that span reads LIMGNTTV. Mo-molybdopterin is bound by residues A805, 805-806, L1046, 1087-1090, Q1202, and L1266; these read AF and GSMG. The active-site Proton acceptor; for azaheterocycle hydroxylase activity is E1268.

It belongs to the xanthine dehydrogenase family. As to quaternary structure, homodimer. Requires [2Fe-2S] cluster as cofactor. The cofactor is FAD. Mo-molybdopterin is required as a cofactor. As to expression, detected in liver, testis, kidney, brain, Harderian gland and olfactory mucosa.

The protein localises to the cytoplasm. The enzyme catalyses an aldehyde + O2 + H2O = a carboxylate + H2O2 + H(+). It carries out the reaction retinal + O2 + H2O = retinoate + H2O2 + H(+). Aldehyde oxidase able to catalyze the oxidation of retinaldehyde into retinoate. Acts as a negative modulator of the epidermal trophism. May be able to oxidize a wide variety of aldehydes into their corresponding carboxylates and to hydroxylate azaheterocycles. In Cavia porcellus (Guinea pig), this protein is Aldehyde oxidase 4 (AOX4).